Here is a 331-residue protein sequence, read N- to C-terminus: Adenosine deaminase (331 aa).

Histidine 12 and histidine 14 together coordinate Zn(2+). Substrate is bound by residues histidine 14, aspartate 16, and glycine 170. Histidine 197 is a Zn(2+) binding site. Glutamate 200 (proton donor) is an active-site residue. Aspartate 278 serves as a coordination point for Zn(2+). Aspartate 279 serves as a coordination point for substrate.

The protein belongs to the metallo-dependent hydrolases superfamily. Adenosine and AMP deaminases family. Adenosine deaminase subfamily. Zn(2+) is required as a cofactor.

The catalysed reaction is adenosine + H2O + H(+) = inosine + NH4(+). It catalyses the reaction 2'-deoxyadenosine + H2O + H(+) = 2'-deoxyinosine + NH4(+). Catalyzes the hydrolytic deamination of adenosine and 2-deoxyadenosine. In Shewanella sp. (strain W3-18-1), this protein is Adenosine deaminase.